Reading from the N-terminus, the 598-residue chain is Aspartate--tRNA ligase (598 aa).

Glu-173 contributes to the L-aspartate binding site. Positions 197–200 (QLFK) are aspartate. Arg-219 lines the L-aspartate pocket. Residues 219-221 (RDE) and Gln-228 each bind ATP. His-449 lines the L-aspartate pocket. Glu-483 is an ATP binding site. Arg-490 serves as a coordination point for L-aspartate. Residue 535–538 (GLDR) coordinates ATP.

Belongs to the class-II aminoacyl-tRNA synthetase family. Type 1 subfamily. Homodimer.

The protein localises to the cytoplasm. It carries out the reaction tRNA(Asp) + L-aspartate + ATP = L-aspartyl-tRNA(Asp) + AMP + diphosphate. In terms of biological role, catalyzes the attachment of L-aspartate to tRNA(Asp) in a two-step reaction: L-aspartate is first activated by ATP to form Asp-AMP and then transferred to the acceptor end of tRNA(Asp). The protein is Aspartate--tRNA ligase of Shewanella halifaxensis (strain HAW-EB4).